The following is a 303-amino-acid chain: Tyrosine recombinase XerC (303 aa).

Positions 3–89 constitute a Core-binding (CB) domain; the sequence is IQNDQWVSAF…TLRSFYQFLV (87 aa). Positions 110–297 constitute a Tyr recombinase domain; it reads KLPSFLYEEE…TKDRLRDVYR (188 aa). Active-site residues include R150, K174, H249, R252, and H275. The active-site O-(3'-phospho-DNA)-tyrosine intermediate is Y284.

The protein belongs to the 'phage' integrase family. XerC subfamily. As to quaternary structure, forms a cyclic heterotetrameric complex composed of two molecules of XerC and two molecules of XerD.

The protein resides in the cytoplasm. In terms of biological role, site-specific tyrosine recombinase, which acts by catalyzing the cutting and rejoining of the recombining DNA molecules. The XerC-XerD complex is essential to convert dimers of the bacterial chromosome into monomers to permit their segregation at cell division. It also contributes to the segregational stability of plasmids. The protein is Tyrosine recombinase XerC of Halalkalibacterium halodurans (strain ATCC BAA-125 / DSM 18197 / FERM 7344 / JCM 9153 / C-125) (Bacillus halodurans).